The primary structure comprises 164 residues: Glutaredoxin-2, mitochondrial (164 aa).

The transit peptide at 1-19 (MIWRRAALAGTRLVWSRSG) directs the protein to the mitochondrion. At Ser-20 the chain carries Phosphoserine. The region spanning 57 to 157 (VNQIQETISD…PLVHQCYLKK (101 aa)) is the Glutaredoxin domain. [2Fe-2S] cluster is bound at residue Cys-68. Lys-74 is a binding site for glutathione. S-glutathionyl cysteine; alternate is present on Cys-77. Cys-77 and Cys-80 are disulfide-bonded. 2 residues coordinate glutathione: Gln-109 and Val-121. Position 153 (Cys-153) interacts with [2Fe-2S] cluster.

It belongs to the glutaredoxin family. As to quaternary structure, monomer; active form. Homodimer; inactive form. The homodimer is probably linked by 1 2Fe-2S cluster. Widely expressed. Expressed in brain, heart, skeletal muscle, colon, thymus, spleen, kidney, liver, small intestine, placenta and lung. Not expressed in peripheral blood leukocytes.

The protein localises to the mitochondrion. It localises to the nucleus. The 2Fe-2S present in the homodimer leads to inactivation of the enzyme. The 2Fe-2S may serve as a redox sensor: the presence of one-electron oxidants or reductants leading to the loss of the 2Fe-2S cluster, subsequent monomerization and activation of the enzyme. Unlike other glutaredoxins, it is not inhibited by oxidation of structural Cys residues. Functionally, glutathione-dependent oxidoreductase that facilitates the maintenance of mitochondrial redox homeostasis upon induction of apoptosis by oxidative stress. Involved in response to hydrogen peroxide and regulation of apoptosis caused by oxidative stress. Acts as a very efficient catalyst of monothiol reactions because of its high affinity for protein glutathione-mixed disulfides. Can receive electrons not only from glutathione (GSH), but also from thioredoxin reductase supporting both monothiol and dithiol reactions. Efficiently catalyzes both glutathionylation and deglutathionylation of mitochondrial complex I, which in turn regulates the superoxide production by the complex. Overexpression decreases the susceptibility to apoptosis and prevents loss of cardiolipin and cytochrome c release. The chain is Glutaredoxin-2, mitochondrial (GLRX2) from Homo sapiens (Human).